The chain runs to 463 residues: Type IV secretion system protein PtlD (463 aa).

The first 24 residues, 1–24, serve as a signal peptide directing secretion; that stretch reads MAGLSRILLSCTLACLLAGQAAQA. 5 consecutive transmembrane segments (helical) span residues 118 to 138, 232 to 252, 253 to 273, 294 to 314, and 333 to 353; these read LQPL…YALL, WLLC…LAAS, LLIV…LFLV, ALVF…VLAG, and MLAA…VPLA. A compositionally biased stretch (low complexity) spans 376–410; that stretch reads AHRQAAARQYAPRPAAAAAAAGPHQAGTYAASATP. The segment at 376–463 is disordered; that stretch reads AHRQAAARQY…RVLPRKPNLP (88 aa). Positions 411 to 420 are enriched in pro residues; that stretch reads APAPARPAPS. Residues 441-455 are compositionally biased toward basic and acidic residues; the sequence is VRRDDRPAPAPDRRV.

The protein localises to the cell membrane. Component of the type IV secretion system ptl required for secretion of assembled pertussis toxin (PTX) through the outer membrane. In Bordetella pertussis (strain Tohama I / ATCC BAA-589 / NCTC 13251), this protein is Type IV secretion system protein PtlD (ptlD).